We begin with the raw amino-acid sequence, 188 residues long: Ribose 1,5-bisphosphate phosphokinase PhnN (188 aa).

The protein belongs to the ribose 1,5-bisphosphokinase family.

It carries out the reaction alpha-D-ribose 1,5-bisphosphate + ATP = 5-phospho-alpha-D-ribose 1-diphosphate + ADP. The protein operates within metabolic intermediate biosynthesis; 5-phospho-alpha-D-ribose 1-diphosphate biosynthesis; 5-phospho-alpha-D-ribose 1-diphosphate from D-ribose 5-phosphate (route II): step 3/3. In terms of biological role, catalyzes the phosphorylation of ribose 1,5-bisphosphate to 5-phospho-D-ribosyl alpha-1-diphosphate (PRPP). The polypeptide is Ribose 1,5-bisphosphate phosphokinase PhnN (Dickeya zeae (strain Ech586) (Dickeya dadantii (strain Ech586))).